A 337-amino-acid polypeptide reads, in one-letter code: Ornithine carbamoyltransferase, catabolic (337 aa).

Carbamoyl phosphate-binding positions include Ser-58–Thr-61, Gln-85, Arg-109, and His-135–Gln-138. Residues Asn-167, Asp-231, and Ser-235–Met-236 each bind L-ornithine. Carbamoyl phosphate contacts are provided by residues Cys-272–Leu-273 and Arg-317.

Belongs to the aspartate/ornithine carbamoyltransferase superfamily. OTCase family.

The protein localises to the cytoplasm. The enzyme catalyses carbamoyl phosphate + L-ornithine = L-citrulline + phosphate + H(+). Its pathway is amino-acid degradation; L-arginine degradation via ADI pathway; carbamoyl phosphate from L-arginine: step 2/2. Its function is as follows. Reversibly catalyzes the transfer of the carbamoyl group from carbamoyl phosphate (CP) to the N(epsilon) atom of ornithine (ORN) to produce L-citrulline. The sequence is that of Ornithine carbamoyltransferase, catabolic (arcB) from Latilactobacillus sakei (Lactobacillus sakei).